A 250-amino-acid chain; its full sequence is 2,5-dichloro-2,5-cyclohexadiene-1,4-diol dehydrogenase LinX (250 aa).

Aspartate 38, aspartate 64, valine 65, tyrosine 156, lysine 160, threonine 191, and threonine 194 together coordinate NAD(+). Tyrosine 156 acts as the Proton acceptor in catalysis.

Belongs to the short-chain dehydrogenases/reductases (SDR) family.

The enzyme catalyses 2,5-dichlorocyclohexa-2,5-dien-1,4-diol + NAD(+) = 2,5-dichlorohydroquinone + NADH + H(+). In terms of biological role, catalyzes the degradation of 2,5-dichloro-2,5-cyclohexadiene-1,4-diol (2,5-DDOL) into 2,5-dichlorohydroquinone (2,5-DCHQ) in vitro. LinX appears not to be involved in gamma-hexachlorocyclohexane (gamma-HCH) degradation pathway, in contrast to LinC which has the same enzymatic activity. The sequence is that of 2,5-dichloro-2,5-cyclohexadiene-1,4-diol dehydrogenase LinX from Sphingobium indicum (strain DSM 16412 / CCM 7286 / MTCC 6364 / B90A).